The following is a 174-amino-acid chain: Crossover junction endodeoxyribonuclease RuvC (174 aa).

Active-site residues include Asp-8, Glu-69, and Asp-141. Positions 8, 69, and 141 each coordinate Mg(2+).

This sequence belongs to the RuvC family. In terms of assembly, homodimer which binds Holliday junction (HJ) DNA. The HJ becomes 2-fold symmetrical on binding to RuvC with unstacked arms; it has a different conformation from HJ DNA in complex with RuvA. In the full resolvosome a probable DNA-RuvA(4)-RuvB(12)-RuvC(2) complex forms which resolves the HJ. The cofactor is Mg(2+).

It localises to the cytoplasm. It catalyses the reaction Endonucleolytic cleavage at a junction such as a reciprocal single-stranded crossover between two homologous DNA duplexes (Holliday junction).. Its function is as follows. The RuvA-RuvB-RuvC complex processes Holliday junction (HJ) DNA during genetic recombination and DNA repair. Endonuclease that resolves HJ intermediates. Cleaves cruciform DNA by making single-stranded nicks across the HJ at symmetrical positions within the homologous arms, yielding a 5'-phosphate and a 3'-hydroxyl group; requires a central core of homology in the junction. The consensus cleavage sequence is 5'-(A/T)TT(C/G)-3'. Cleavage occurs on the 3'-side of the TT dinucleotide at the point of strand exchange. HJ branch migration catalyzed by RuvA-RuvB allows RuvC to scan DNA until it finds its consensus sequence, where it cleaves and resolves the cruciform DNA. In Xanthomonas oryzae pv. oryzae (strain MAFF 311018), this protein is Crossover junction endodeoxyribonuclease RuvC.